We begin with the raw amino-acid sequence, 1024 residues long: Beta-galactosidase (1024 aa).

Substrate contacts are provided by Asn-103 and Asp-202. A Na(+)-binding site is contributed by Asp-202. Mg(2+)-binding residues include Glu-417, His-419, and Glu-462. Substrate-binding positions include Glu-462 and 538-541 (EYAH). Glu-462 functions as the Proton donor in the catalytic mechanism. Glu-538 functions as the Nucleophile in the catalytic mechanism. Mg(2+) is bound at residue Asn-598. 2 residues coordinate Na(+): Phe-602 and Asn-605. Substrate-binding residues include Asn-605 and Trp-1000.

It belongs to the glycosyl hydrolase 2 family. Homotetramer. It depends on Mg(2+) as a cofactor. Na(+) is required as a cofactor.

The enzyme catalyses Hydrolysis of terminal non-reducing beta-D-galactose residues in beta-D-galactosides.. This chain is Beta-galactosidase, found in Escherichia coli O9:H4 (strain HS).